The following is a 275-amino-acid chain: Lectin (275 aa).

A signal peptide spans 1 to 30 (MASLQTQMISFYLIFLSILLTTIFFFKVNS). 2 residues coordinate D-glucose: D111 and G129. The Mn(2+) site is built by E149 and D151. Ca(2+) contacts are provided by D151, F153, N155, and D159. D159 and H166 together coordinate Mn(2+). Residues 211–217 (NSLEEEN) constitute a propeptide that is removed on maturation. D-glucose-binding residues include G246 and A247. Residues 270 to 275 (KQAADA) constitute a propeptide that is removed on maturation.

Belongs to the leguminous lectin family. Heterotetramer of two alpha and two beta chains. The mature form consists of two chains, alpha and beta, produced by cleavage of the immature protein. These remain cleaved, yet fold together to form one subunit.

D-mannose specific lectin. This chain is Lectin, found in Lens culinaris subsp. orientalis (Oriental wild lentil).